The following is a 258-amino-acid chain: Methylthioribulose-1-phosphate dehydratase (258 aa).

Polar residues predominate over residues 1–20 (MTPPSNGQAAETNDHLVQSD). Positions 1–21 (MTPPSNGQAAETNDHLVQSDN) are disordered. Cys-105 contributes to the substrate binding site. The Zn(2+) site is built by His-123 and His-125. Glu-153 functions as the Proton donor/acceptor in the catalytic mechanism. His-210 lines the Zn(2+) pocket.

Belongs to the aldolase class II family. MtnB subfamily. Zn(2+) is required as a cofactor.

The protein localises to the cytoplasm. It carries out the reaction 5-(methylsulfanyl)-D-ribulose 1-phosphate = 5-methylsulfanyl-2,3-dioxopentyl phosphate + H2O. Its pathway is amino-acid biosynthesis; L-methionine biosynthesis via salvage pathway; L-methionine from S-methyl-5-thio-alpha-D-ribose 1-phosphate: step 2/6. Its function is as follows. Catalyzes the dehydration of methylthioribulose-1-phosphate (MTRu-1-P) into 2,3-diketo-5-methylthiopentyl-1-phosphate (DK-MTP-1-P). In Chaetomium globosum (strain ATCC 6205 / CBS 148.51 / DSM 1962 / NBRC 6347 / NRRL 1970) (Soil fungus), this protein is Methylthioribulose-1-phosphate dehydratase.